Consider the following 372-residue polypeptide: MNKILGLRRAKSAPLVPGAEKGKEKSVEETGFMTLAGRLRRGMQRLSRRGYGDNRRSRGSENNEQDPQPGDKIASPQRRDYTKSEASCRPGSGKTSPCGSSGTPCSDDAGGGRNGQENSGTRDTPCWMYKDSKSRYRVGVTPDLIPTIFGVSEVAASGLPRCRDKAAKRQPQSLLSPGVEALLVTIAESLETNGKRVSGRTAGKLWSWRVRDKAPERDYRNVTPTMFEGSCFGKPIRAGVFNAPRAYLDDLLGDHYFVPYLRRLPRDFTREETLSLRVATEAAVFANMLWEARHKNNFGAGVSYYPGALASATGTAPDFTDRGRSSLDSPYFASTFLPGIFVILPPGELPIDFMRLAVLLAVSAIETCVTTV.

Basic residues-rich tracts occupy residues 1-11 and 38-48; these read MNKILGLRRAK and RLRRGMQRLSR. Residues 1–127 are disordered; the sequence is MNKILGLRRA…NSGTRDTPCW (127 aa). Positions 50–61 are enriched in basic and acidic residues; sequence GYGDNRRSRGSE. A compositionally biased stretch (polar residues) spans 93–104; that stretch reads GKTSPCGSSGTP.

This is an uncharacterized protein from Psittacid herpesvirus 1 (isolate Amazon parrot/-/97-0001/1997) (PsHV-1).